Reading from the N-terminus, the 20-residue chain is Protein YfiS (20 aa).

In Escherichia coli (strain K12), this protein is Protein YfiS.